The chain runs to 209 residues: Large ribosomal subunit protein bL25 (209 aa).

The protein belongs to the bacterial ribosomal protein bL25 family. CTC subfamily. As to quaternary structure, part of the 50S ribosomal subunit; part of the 5S rRNA/L5/L18/L25 subcomplex. Contacts the 5S rRNA. Binds to the 5S rRNA independently of L5 and L18.

Its function is as follows. This is one of the proteins that binds to the 5S RNA in the ribosome where it forms part of the central protuberance. The protein is Large ribosomal subunit protein bL25 of Chlorobium phaeobacteroides (strain BS1).